Reading from the N-terminus, the 276-residue chain is Elongation factor Ts, mitochondrial (276 aa).

This sequence belongs to the EF-Ts family.

It localises to the mitochondrion. Functionally, associates with the EF-Tu.GDP complex and induces the exchange of GDP to GTP. It remains bound to the aminoacyl-tRNA.EF-Tu.GTP complex up to the GTP hydrolysis stage on the ribosome. The polypeptide is Elongation factor Ts, mitochondrial (Leishmania infantum).